We begin with the raw amino-acid sequence, 273 residues long: Glutamate 5-kinase (273 aa).

K15 is a binding site for ATP. S55, D142, and N158 together coordinate substrate. ATP-binding positions include 178 to 179 (SD) and 220 to 226 (TGGMLSK).

The protein belongs to the glutamate 5-kinase family.

It localises to the cytoplasm. It carries out the reaction L-glutamate + ATP = L-glutamyl 5-phosphate + ADP. Its pathway is amino-acid biosynthesis; L-proline biosynthesis; L-glutamate 5-semialdehyde from L-glutamate: step 1/2. Its function is as follows. Catalyzes the transfer of a phosphate group to glutamate to form L-glutamate 5-phosphate. The protein is Glutamate 5-kinase of Streptococcus pyogenes serotype M1.